A 240-amino-acid chain; its full sequence is UDP-2,3-diacylglucosamine hydrolase (240 aa).

5 residues coordinate Mn(2+): D9, H11, D43, N81, and H116. N81–R82 provides a ligand contact to substrate. Substrate contacts are provided by D124, S162, K166, K169, and H197. Residues H197 and H199 each coordinate Mn(2+).

The protein belongs to the LpxH family. It depends on Mn(2+) as a cofactor.

It is found in the cell inner membrane. It carries out the reaction UDP-2-N,3-O-bis[(3R)-3-hydroxytetradecanoyl]-alpha-D-glucosamine + H2O = 2-N,3-O-bis[(3R)-3-hydroxytetradecanoyl]-alpha-D-glucosaminyl 1-phosphate + UMP + 2 H(+). Its pathway is glycolipid biosynthesis; lipid IV(A) biosynthesis; lipid IV(A) from (3R)-3-hydroxytetradecanoyl-[acyl-carrier-protein] and UDP-N-acetyl-alpha-D-glucosamine: step 4/6. In terms of biological role, hydrolyzes the pyrophosphate bond of UDP-2,3-diacylglucosamine to yield 2,3-diacylglucosamine 1-phosphate (lipid X) and UMP by catalyzing the attack of water at the alpha-P atom. Involved in the biosynthesis of lipid A, a phosphorylated glycolipid that anchors the lipopolysaccharide to the outer membrane of the cell. This Neisseria meningitidis serogroup B (strain ATCC BAA-335 / MC58) protein is UDP-2,3-diacylglucosamine hydrolase.